The following is a 38-amino-acid chain: Cytochrome b6-f complex subunit 5 (38 aa).

Residues 5–25 (LVLGIVLGLIPITLAGLFVAA) form a helical membrane-spanning segment.

Belongs to the PetG family. As to quaternary structure, the 4 large subunits of the cytochrome b6-f complex are cytochrome b6, subunit IV (17 kDa polypeptide, PetD), cytochrome f and the Rieske protein, while the 4 small subunits are PetG, PetL, PetM and PetN. The complex functions as a dimer.

It localises to the cellular thylakoid membrane. Its function is as follows. Component of the cytochrome b6-f complex, which mediates electron transfer between photosystem II (PSII) and photosystem I (PSI), cyclic electron flow around PSI, and state transitions. PetG is required for either the stability or assembly of the cytochrome b6-f complex. The sequence is that of Cytochrome b6-f complex subunit 5 from Microcystis aeruginosa (strain NIES-843 / IAM M-2473).